Consider the following 551-residue polypeptide: Arginine--tRNA ligase (551 aa).

A 'HIGH' region motif is present at residues alanine 124 to histidine 134.

Belongs to the class-I aminoacyl-tRNA synthetase family. As to quaternary structure, monomer.

Its subcellular location is the cytoplasm. The catalysed reaction is tRNA(Arg) + L-arginine + ATP = L-arginyl-tRNA(Arg) + AMP + diphosphate. The chain is Arginine--tRNA ligase from Solidesulfovibrio magneticus (strain ATCC 700980 / DSM 13731 / RS-1) (Desulfovibrio magneticus).